The sequence spans 311 residues: HPr kinase/phosphorylase (311 aa).

Active-site residues include histidine 139 and lysine 160. 154 to 161 (GDSGVGKS) is an ATP binding site. Serine 161 contacts Mg(2+). Aspartate 178 acts as the Proton acceptor; for phosphorylation activity. Proton donor; for dephosphorylation activity in catalysis. The tract at residues 202-211 (LEIRGIGIID) is important for the catalytic mechanism of both phosphorylation and dephosphorylation. A Mg(2+)-binding site is contributed by glutamate 203. The active site involves arginine 244. The important for the catalytic mechanism of dephosphorylation stretch occupies residues 265-270 (PVKTGR).

The protein belongs to the HPrK/P family. Homohexamer. It depends on Mg(2+) as a cofactor.

The catalysed reaction is [HPr protein]-L-serine + ATP = [HPr protein]-O-phospho-L-serine + ADP + H(+). The enzyme catalyses [HPr protein]-O-phospho-L-serine + phosphate + H(+) = [HPr protein]-L-serine + diphosphate. Its function is as follows. Catalyzes the ATP- as well as the pyrophosphate-dependent phosphorylation of a specific serine residue in HPr, a phosphocarrier protein of the phosphoenolpyruvate-dependent sugar phosphotransferase system (PTS). HprK/P also catalyzes the pyrophosphate-producing, inorganic phosphate-dependent dephosphorylation (phosphorolysis) of seryl-phosphorylated HPr (P-Ser-HPr). The two antagonistic activities of HprK/P are regulated by several intracellular metabolites, which change their concentration in response to the absence or presence of rapidly metabolisable carbon sources (glucose, fructose, etc.) in the growth medium. Therefore, by controlling the phosphorylation state of HPr, HPrK/P is a sensor enzyme that plays a major role in the regulation of carbon metabolism and sugar transport: it mediates carbon catabolite repression (CCR), and regulates PTS-catalyzed carbohydrate uptake and inducer exclusion. In Levilactobacillus brevis (strain ATCC 367 / BCRC 12310 / CIP 105137 / JCM 1170 / LMG 11437 / NCIMB 947 / NCTC 947) (Lactobacillus brevis), this protein is HPr kinase/phosphorylase.